The chain runs to 400 residues: Acetylornithine aminotransferase (400 aa).

Pyridoxal 5'-phosphate contacts are provided by residues 113–114 (GA) and Phe139. Arg142 is a binding site for N(2)-acetyl-L-ornithine. 224 to 227 (DEVQ) is a pyridoxal 5'-phosphate binding site. Lys253 is modified (N6-(pyridoxal phosphate)lysine). Ser281 is a binding site for N(2)-acetyl-L-ornithine. Thr282 is a pyridoxal 5'-phosphate binding site.

The protein belongs to the class-III pyridoxal-phosphate-dependent aminotransferase family. ArgD subfamily. Homodimer. The cofactor is pyridoxal 5'-phosphate.

It is found in the cytoplasm. The catalysed reaction is N(2)-acetyl-L-ornithine + 2-oxoglutarate = N-acetyl-L-glutamate 5-semialdehyde + L-glutamate. It functions in the pathway amino-acid biosynthesis; L-arginine biosynthesis; N(2)-acetyl-L-ornithine from L-glutamate: step 4/4. This chain is Acetylornithine aminotransferase, found in Mycobacterium bovis (strain ATCC BAA-935 / AF2122/97).